We begin with the raw amino-acid sequence, 198 residues long: uncharacterized protein (198 aa).

This is an uncharacterized protein from Acheta domesticus (House cricket).